The sequence spans 164 residues: uncharacterized protein (164 aa).

Positions 28 to 157 constitute an HTH marR-type domain; that stretch reads EAEILYQLQG…LIDVLARMRN (130 aa). The segment at residues 71-94 is a DNA-binding region (H-T-H motif); that stretch reads QSDLQKKVNIDSAAVTRHLKQLES.

This is an uncharacterized protein from Bacillus subtilis (strain 168).